The chain runs to 147 residues: Protein-export protein SecB (147 aa).

It belongs to the SecB family. In terms of assembly, homotetramer, a dimer of dimers. One homotetramer interacts with 1 SecA dimer.

Its subcellular location is the cytoplasm. Functionally, one of the proteins required for the normal export of preproteins out of the cell cytoplasm. It is a molecular chaperone that binds to a subset of precursor proteins, maintaining them in a translocation-competent state. It also specifically binds to its receptor SecA. In Neisseria meningitidis serogroup B (strain ATCC BAA-335 / MC58), this protein is Protein-export protein SecB.